Here is a 353-residue protein sequence, read N- to C-terminus: Vomeronasal type-1 receptor 1 (353 aa).

Over 1 to 56 (MVGDTLKLLSPLMTRYFFLLFYSTDSSDLNENQHPLDFDEMAFGKVKSGISFLIQT) the chain is Extracellular. Residues 57 to 77 (GVGILGNSFLLCFYNLILFTG) traverse the membrane as a helical segment. Residues 78 to 84 (HKLRPTD) are Cytoplasmic-facing. A helical transmembrane segment spans residues 85–105 (LILSQLALANSMVLFFKGIPQ). The Extracellular portion of the chain corresponds to 106–132 (TMAAFGLKYLLNDTGCKFVFYYHRVGT). The N-linked (GlcNAc...) asparagine glycan is linked to Asn-117. Residues 133-153 (RVSLSTICLLNGFQAIKLNPS) form a helical membrane-spanning segment. Over 154 to 169 (ICRWMEIKIRSPRFID) the chain is Cytoplasmic. Residues 170-190 (FCCLLCWAPHVLMNASVLLLV) form a helical membrane-spanning segment. The Extracellular segment spans residues 191–226 (NGPLNSKNSSAKNNYGYCSYKASKRFSSLHAVLYFS). Asn-198 carries an N-linked (GlcNAc...) asparagine glycan. The chain crosses the membrane as a helical span at residues 227-247 (PDFMSLGFMVWASGSMVFFLY). The Cytoplasmic segment spans residues 248 to 274 (RHKQQVQHNHSNRLSCRPSQEARATHT). Residues 275 to 295 (IMVLVSSFFVFYSVHSFLTIW) traverse the membrane as a helical segment. Topologically, residues 296–303 (TTVVANPG) are extracellular. Residues 304–324 (QWIVTNSVLVASCFPARSPFV) form a helical membrane-spanning segment. Residues 325–353 (LIMSDTHISQFCFACRTRKTLFPNLVVMP) are Cytoplasmic-facing.

Belongs to the G-protein coupled receptor 1 family. In terms of tissue distribution, expressed in the olfactory mucosa, very low expression in brain, lung and kidney.

Its subcellular location is the cell membrane. In terms of biological role, putative pheromone receptor. The polypeptide is Vomeronasal type-1 receptor 1 (VN1R1) (Homo sapiens (Human)).